The primary structure comprises 361 residues: Cytochrome c peroxidase, mitochondrial (361 aa).

The N-terminal 41 residues, 1–41 (MASAARSASRAFLRSSLRPAVRSSRFALPTQGLRVASRRGY), are a transit peptide targeting the mitochondrion. His122 serves as the catalytic Proton acceptor. His245 provides a ligand contact to heme b. The active-site Tryptophan radical intermediate is the Trp261.

This sequence belongs to the peroxidase family. Cytochrome c peroxidase subfamily. In terms of assembly, forms a one-to-one complex with cytochrome c. It depends on heme b as a cofactor.

It localises to the mitochondrion matrix. Its subcellular location is the mitochondrion intermembrane space. The enzyme catalyses 2 Fe(II)-[cytochrome c] + H2O2 + 2 H(+) = 2 Fe(III)-[cytochrome c] + 2 H2O. Destroys radicals which are normally produced within the cells and which are toxic to biological systems. The sequence is that of Cytochrome c peroxidase, mitochondrial (ccp1) from Emericella nidulans (strain FGSC A4 / ATCC 38163 / CBS 112.46 / NRRL 194 / M139) (Aspergillus nidulans).